A 322-amino-acid polypeptide reads, in one-letter code: UV DNA damage endonuclease (322 aa).

The protein belongs to the uve1/UvsE family.

Its function is as follows. Component in a DNA repair pathway. Removal of UV LIGHT damaged nucleotides. Recognizes pyrimidine dimers and cleave a phosphodiester bond immediately 5' to the lesion. The polypeptide is UV DNA damage endonuclease (Halalkalibacterium halodurans (strain ATCC BAA-125 / DSM 18197 / FERM 7344 / JCM 9153 / C-125) (Bacillus halodurans)).